The primary structure comprises 59 residues: Cecropin-A (59 aa).

An N-terminal signal peptide occupies residues 1 to 23 (MNFNKLFVIVLLAALAFFGQAEA). Position 57 is a leucine amide (leucine 57).

It belongs to the cecropin family.

Its subcellular location is the secreted. In terms of biological role, cecropins have lytic and antibacterial activity against several Gram-positive and Gram-negative bacteria. This Culex pipiens pipiens (Northern house mosquito) protein is Cecropin-A (CECA).